Consider the following 908-residue polypeptide: Putative cell signaling protein HAM1 (908 aa).

2 disordered regions span residues Met-1–Ser-24 and Thr-177–Gln-359. Basic and acidic residues-rich tracts occupy residues Ala-179 to Ser-192, His-231 to Lys-247, Ala-261 to Gly-283, Glu-306 to Ala-321, and Asn-338 to Gln-359. Residues Tyr-255–Thr-282 adopt a coiled-coil conformation.

In terms of processing, palmitoylated.

In terms of biological role, may act as a negative regulator of mating during vegetative growth. The polypeptide is Putative cell signaling protein HAM1 (Cryptococcus neoformans var. grubii serotype A (strain H99 / ATCC 208821 / CBS 10515 / FGSC 9487) (Filobasidiella neoformans var. grubii)).